Consider the following 248-residue polypeptide: DNA polymerase sliding clamp 2 (248 aa).

This sequence belongs to the PCNA family. Homotrimer. The subunits circularize to form a toroid; DNA passes through its center. Replication factor C (RFC) is required to load the toroid on the DNA.

Sliding clamp subunit that acts as a moving platform for DNA processing. Responsible for tethering the catalytic subunit of DNA polymerase and other proteins to DNA during high-speed replication. The chain is DNA polymerase sliding clamp 2 from Sulfurisphaera ohwakuensis.